We begin with the raw amino-acid sequence, 1185 residues long: Liprin-alpha-4 (1185 aa).

2 coiled-coil regions span residues 24 to 123 (ANFE…CLVS) and 165 to 499 (DEKV…GRGG). Disordered regions lie at residues 638–709 (SASP…RTLR) and 721–757 (EEGK…KSSI). At S640 the chain carries Phosphoserine. Over residues 645–656 (GRSTPKLTSRSA) the composition is skewed to polar residues. S681 is modified (phosphoserine). Residues 684 to 695 (SREENREDKATI) show a composition bias toward basic and acidic residues. Positions 729–742 (DQGSNPSSSNSSQD) are enriched in low complexity. 3 SAM domains span residues 829–895 (WDGP…MVSL), 944–1008 (NHEW…LKRL), and 1032–1101 (WTND…LLAL).

This sequence belongs to the liprin family. Liprin-alpha subfamily. Forms homodimers and heterodimers with liprins-alpha and liprins-beta. Interacts with the second PTPase domain of PTPRD, PTPRF and PTPRS. Interacts with RIMS1 and RIMS2. Interacts with GIT1 and GIT2. Interacts with GRIP1. Interacts with KIF1A. In terms of tissue distribution, expressed only in the heart, brain, and skeletal muscle.

Its subcellular location is the cytoplasm. It localises to the cell surface. May regulate the disassembly of focal adhesions. May localize receptor-like tyrosine phosphatases type 2A at specific sites on the plasma membrane, possibly regulating their interaction with the extracellular environment and their association with substrates. This is Liprin-alpha-4 (PPFIA4) from Homo sapiens (Human).